Reading from the N-terminus, the 706-residue chain is DNA ligase (706 aa).

Residues 1–20 form a disordered region; sequence MSATAGTADESGVASAAASA. NAD(+)-binding positions include 50–54, 99–100, and glutamate 128; these read DAEYD and SL. Catalysis depends on lysine 130, which acts as the N6-AMP-lysine intermediate. NAD(+)-binding residues include arginine 151, glutamate 188, lysine 304, and lysine 328. Zn(2+)-binding residues include cysteine 422, cysteine 425, cysteine 440, and cysteine 446. The region spanning 604–694 is the BRCT domain; it reads EGPRPLDGVT…VDAASKLAVP (91 aa).

Belongs to the NAD-dependent DNA ligase family. LigA subfamily. Mg(2+) is required as a cofactor. It depends on Mn(2+) as a cofactor.

The enzyme catalyses NAD(+) + (deoxyribonucleotide)n-3'-hydroxyl + 5'-phospho-(deoxyribonucleotide)m = (deoxyribonucleotide)n+m + AMP + beta-nicotinamide D-nucleotide.. In terms of biological role, DNA ligase that catalyzes the formation of phosphodiester linkages between 5'-phosphoryl and 3'-hydroxyl groups in double-stranded DNA using NAD as a coenzyme and as the energy source for the reaction. It is essential for DNA replication and repair of damaged DNA. The protein is DNA ligase of Frankia casuarinae (strain DSM 45818 / CECT 9043 / HFP020203 / CcI3).